The following is a 665-amino-acid chain: Pentatricopeptide repeat-containing protein At1g04840 (665 aa).

11 PPR repeats span residues 90-124, 125-155, 160-190, 195-229, 230-256, 257-291, 292-326, 327-357, 358-392, 393-423, and 429-459; these read NPFV…GVKP, DRLT…TLKN, DSFV…SPDR, SILI…NSGS, WSTL…MPEK, NVVS…GLKP, NEYT…GIKL, DRAI…MNHK, DILS…GEKP, DEVV…MRLD, and TLKH…MPIN. The type E motif stretch occupies residues 464-539; sequence TWAALYRACK…SLGWSYIELD (76 aa). Residues 540–570 are type E(+) motif; the sequence is GQLNKFSAGDYSHKLTQEIGLKLDEIISLAI. A type DYW motif region spans residues 571 to 665; the sequence is QKGYNPGADW…DGRCSCGDYW (95 aa).

Belongs to the PPR family. PCMP-H subfamily.

In Arabidopsis thaliana (Mouse-ear cress), this protein is Pentatricopeptide repeat-containing protein At1g04840 (PCMP-H64).